The following is a 244-amino-acid chain: 2-C-methyl-D-erythritol 4-phosphate cytidylyltransferase (244 aa).

Belongs to the IspD/TarI cytidylyltransferase family. IspD subfamily.

It catalyses the reaction 2-C-methyl-D-erythritol 4-phosphate + CTP + H(+) = 4-CDP-2-C-methyl-D-erythritol + diphosphate. It participates in isoprenoid biosynthesis; isopentenyl diphosphate biosynthesis via DXP pathway; isopentenyl diphosphate from 1-deoxy-D-xylulose 5-phosphate: step 2/6. In terms of biological role, catalyzes the formation of 4-diphosphocytidyl-2-C-methyl-D-erythritol from CTP and 2-C-methyl-D-erythritol 4-phosphate (MEP). The polypeptide is 2-C-methyl-D-erythritol 4-phosphate cytidylyltransferase (Corynebacterium diphtheriae (strain ATCC 700971 / NCTC 13129 / Biotype gravis)).